Reading from the N-terminus, the 904-residue chain is DNA polymerase I (904 aa).

Positions 186 to 279 constitute a 5'-3' exonuclease domain; it reads TPRQYPDFAA…DTLRLQPWDR (94 aa). A 3'-5' exonuclease domain is found at 317–493; the sequence is RGGALAPGTV…LADALDAELA (177 aa).

The protein belongs to the DNA polymerase type-A family. In terms of assembly, single-chain monomer with multiple functions.

It carries out the reaction DNA(n) + a 2'-deoxyribonucleoside 5'-triphosphate = DNA(n+1) + diphosphate. In addition to polymerase activity, this DNA polymerase exhibits 3'-5' and 5'-3' exonuclease activity. This chain is DNA polymerase I (polA), found in Mycobacterium bovis (strain ATCC BAA-935 / AF2122/97).